The chain runs to 239 residues: Lactate utilization protein A (239 aa).

It belongs to the LutA/YkgE family.

Is involved in L-lactate degradation and allows cells to grow with lactate as the sole carbon source. This chain is Lactate utilization protein A, found in Bacillus cereus (strain B4264).